Consider the following 448-residue polypeptide: 5-hydroxytryptamine receptor 7 (448 aa).

Over 1 to 86 (MMDVNSSGRP…INYGRVEKVV (86 aa)) the chain is Extracellular. N-linked (GlcNAc...) asparagine glycosylation is found at asparagine 5 and asparagine 69. The chain crosses the membrane as a helical span at residues 87-111 (IGSILTLITLLTIAGNCLVVISVCF). The Cytoplasmic portion of the chain corresponds to 112–121 (VKKLRQPSNY). Residues 122 to 143 (LIVSLALADLSVAVAVMPFVSV) traverse the membrane as a helical segment. Topologically, residues 144–155 (TDLIGGKWIFGH) are extracellular. A helical membrane pass occupies residues 156 to 181 (FFCNVFIAMDVMCCTASIMTLCVISI). Cysteines 158 and 234 form a disulfide. Residue aspartate 165 participates in serotonin binding. At 182 to 201 (DRYLGITRPLTYPVRQNGKC) the chain is on the cytoplasmic side. A helical membrane pass occupies residues 202–222 (MAKMILSVWLLSASITLPPLF). The Extracellular portion of the chain corresponds to 223 to 240 (GWAQNVNDDKVCLISQDF). A helical membrane pass occupies residues 241 to 263 (GYTIYSTAVAFYIPMSVMLFMYY). Topologically, residues 264-329 (QIYKAARKSA…SIFKREQKAA (66 aa)) are cytoplasmic. The chain crosses the membrane as a helical span at residues 330–355 (TTLGIIVGAFTVCWLPFFLLSTARPF). Residues 356 to 366 (ICGTSCSCIPL) lie on the Extracellular side of the membrane. A helical transmembrane segment spans residues 367–390 (WVERTCLWLGYANSLINPFIYAFF). Residues 391–448 (NRDLRTTYRSLLQCQYRNINRKLSAAGMHEALKLAERPERSEFVLQNCDHCGKKGHDT) lie on the Cytoplasmic side of the membrane. Cysteine 404 carries the S-palmitoyl cysteine lipid modification.

This sequence belongs to the G-protein coupled receptor 1 family.

It is found in the cell membrane. G-protein coupled receptor for 5-hydroxytryptamine (serotonin), a biogenic hormone that functions as a neurotransmitter, a hormone and a mitogen. Ligand binding causes a conformation change that triggers signaling via guanine nucleotide-binding proteins (G proteins) and modulates the activity of downstream effectors. HTR7 is coupled to G(s) G alpha proteins and mediates activation of adenylate cyclase activity. The polypeptide is 5-hydroxytryptamine receptor 7 (Htr7) (Mus musculus (Mouse)).